The primary structure comprises 771 residues: Nitrogen regulation protein NtrY (771 aa).

4 helical membrane passes run 22–46 (FGLF…ILMG), 56–76 (VVIS…AMVG), 99–122 (IVGL…SLTL), and 295–319 (VAFA…GLNF). The HAMP domain occupies 321–374 (KWLVAPIRRLMSAADHVAEGNLDVRVPIYRAEGDLASLAETFNKMTHELRSQRE). Positions 386–458 (RRRFTEAVLS…HARQRSVQGN (73 aa)) constitute a PAS domain. Residues 511–728 (RIAHEIKNPL…WIRLTLKAEG (218 aa)) enclose the Histidine kinase domain. His-514 carries the phosphohistidine; by autocatalysis modification. The tract at residues 727–771 (EGPKAEPTDASTKATGAATPAAPAASAMARDAAADSAARGKNERT) is disordered. Positions 740-763 (ATGAATPAAPAASAMARDAAADSA) are enriched in low complexity.

Its subcellular location is the cell membrane. It catalyses the reaction ATP + protein L-histidine = ADP + protein N-phospho-L-histidine.. Its function is as follows. Member of the two-component regulatory system NtrY/NtrX involved in nitrogen level control. Probably activates NtrX by phosphorylation. This Azorhizobium caulinodans (strain ATCC 43989 / DSM 5975 / JCM 20966 / LMG 6465 / NBRC 14845 / NCIMB 13405 / ORS 571) protein is Nitrogen regulation protein NtrY (ntrY).